The following is a 307-amino-acid chain: Aspartate carbamoyltransferase catalytic subunit (307 aa).

Positions 54 and 55 each coordinate carbamoyl phosphate. An L-aspartate-binding site is contributed by Lys83. Residues Arg104, His132, and Gln135 each contribute to the carbamoyl phosphate site. L-aspartate contacts are provided by Arg165 and Arg228. Carbamoyl phosphate contacts are provided by Leu267 and Pro268.

This sequence belongs to the aspartate/ornithine carbamoyltransferase superfamily. ATCase family. As to quaternary structure, heterododecamer (2C3:3R2) of six catalytic PyrB chains organized as two trimers (C3), and six regulatory PyrI chains organized as three dimers (R2).

It carries out the reaction carbamoyl phosphate + L-aspartate = N-carbamoyl-L-aspartate + phosphate + H(+). It functions in the pathway pyrimidine metabolism; UMP biosynthesis via de novo pathway; (S)-dihydroorotate from bicarbonate: step 2/3. In terms of biological role, catalyzes the condensation of carbamoyl phosphate and aspartate to form carbamoyl aspartate and inorganic phosphate, the committed step in the de novo pyrimidine nucleotide biosynthesis pathway. The polypeptide is Aspartate carbamoyltransferase catalytic subunit (Clostridium botulinum (strain ATCC 19397 / Type A)).